Consider the following 488-residue polypeptide: Ammonium transporter 1 member 1 (488 aa).

11 consecutive transmembrane segments (helical) span residues 47–69, 90–109, 129–148, 153–175, 195–217, 238–257, 281–303, 316–333, 337–356, 368–387, and 418–440; these read TYLL…LLAG, LFYY…NGFI, FLYQ…GSIA, FVAY…SHWF, VIDF…YGAL, HSAS…WYGF, AVGR…TLFG, VCNG…GCSV, WAAI…FNML, AAQL…GLFA, and HIIQ…FYIL.

Belongs to the ammonia transporter channel (TC 1.A.11.2) family. Root hairs and leaves.

The protein resides in the membrane. Ammonium transporter that may be involved in ammonium uptake from the soil. This Solanum lycopersicum (Tomato) protein is Ammonium transporter 1 member 1 (AMT1-1).